The following is a 756-amino-acid chain: Polyribonucleotide nucleotidyltransferase (756 aa).

Positions 532 and 538 each coordinate Mg(2+). A KH domain is found at 598 to 657 (PRVTAIKVPVDKIGEVIGPKGKMINSITEQTGANISIEDDGTVFVGATDGPSAQAAIDMI). An S1 motif domain is found at 669–738 (GERFLGTVVK…ARGKISLIPV (70 aa)).

It belongs to the polyribonucleotide nucleotidyltransferase family. Mg(2+) serves as cofactor.

It is found in the cytoplasm. The enzyme catalyses RNA(n+1) + phosphate = RNA(n) + a ribonucleoside 5'-diphosphate. Functionally, involved in mRNA degradation. Catalyzes the phosphorolysis of single-stranded polyribonucleotides processively in the 3'- to 5'-direction. The protein is Polyribonucleotide nucleotidyltransferase of Rhodococcus erythropolis (strain PR4 / NBRC 100887).